The primary structure comprises 208 residues: PITH domain-containing protein ZK353.9 (208 aa).

A PITH domain is found at 17 to 189 (EVPGDDVYRY…RIAIATYESR (173 aa)).

It belongs to the PITHD1 family.

This is PITH domain-containing protein ZK353.9 from Caenorhabditis elegans.